The following is a 294-amino-acid chain: 4-hydroxy-tetrahydrodipicolinate synthase (294 aa).

Thr-47 provides a ligand contact to pyruvate. Tyr-135 serves as the catalytic Proton donor/acceptor. Catalysis depends on Lys-163, which acts as the Schiff-base intermediate with substrate. Position 205 (Thr-205) interacts with pyruvate.

This sequence belongs to the DapA family. In terms of assembly, homotetramer; dimer of dimers.

It is found in the cytoplasm. It catalyses the reaction L-aspartate 4-semialdehyde + pyruvate = (2S,4S)-4-hydroxy-2,3,4,5-tetrahydrodipicolinate + H2O + H(+). The protein operates within amino-acid biosynthesis; L-lysine biosynthesis via DAP pathway; (S)-tetrahydrodipicolinate from L-aspartate: step 3/4. Functionally, catalyzes the condensation of (S)-aspartate-beta-semialdehyde [(S)-ASA] and pyruvate to 4-hydroxy-tetrahydrodipicolinate (HTPA). This chain is 4-hydroxy-tetrahydrodipicolinate synthase, found in Rickettsia rickettsii.